We begin with the raw amino-acid sequence, 266 residues long: Ribosomal RNA small subunit methyltransferase A (266 aa).

Residues histidine 13, leucine 15, glycine 40, glutamate 61, aspartate 85, and asparagine 104 each contribute to the S-adenosyl-L-methionine site.

This sequence belongs to the class I-like SAM-binding methyltransferase superfamily. rRNA adenine N(6)-methyltransferase family. RsmA subfamily.

The protein resides in the cytoplasm. It catalyses the reaction adenosine(1518)/adenosine(1519) in 16S rRNA + 4 S-adenosyl-L-methionine = N(6)-dimethyladenosine(1518)/N(6)-dimethyladenosine(1519) in 16S rRNA + 4 S-adenosyl-L-homocysteine + 4 H(+). In terms of biological role, specifically dimethylates two adjacent adenosines (A1518 and A1519) in the loop of a conserved hairpin near the 3'-end of 16S rRNA in the 30S particle. May play a critical role in biogenesis of 30S subunits. This Parabacteroides distasonis (strain ATCC 8503 / DSM 20701 / CIP 104284 / JCM 5825 / NCTC 11152) protein is Ribosomal RNA small subunit methyltransferase A.